The primary structure comprises 507 residues: ATP synthase subunit alpha, chloroplastic (507 aa).

170–177 (GDRQTGKT) is a binding site for ATP. The residue at position 257 (T257) is a Phosphothreonine.

This sequence belongs to the ATPase alpha/beta chains family. As to quaternary structure, F-type ATPases have 2 components, CF(1) - the catalytic core - and CF(0) - the membrane proton channel. CF(1) has five subunits: alpha(3), beta(3), gamma(1), delta(1), epsilon(1). CF(0) has four main subunits: a, b, b' and c.

Its subcellular location is the plastid. It localises to the chloroplast thylakoid membrane. It carries out the reaction ATP + H2O + 4 H(+)(in) = ADP + phosphate + 5 H(+)(out). Functionally, produces ATP from ADP in the presence of a proton gradient across the membrane. The alpha chain is a regulatory subunit. This Draba nemorosa (Woodland whitlowgrass) protein is ATP synthase subunit alpha, chloroplastic.